An 88-amino-acid chain; its full sequence is UPF0250 protein Ssed_3490 (88 aa).

Belongs to the UPF0250 family.

In Shewanella sediminis (strain HAW-EB3), this protein is UPF0250 protein Ssed_3490.